Here is a 103-residue protein sequence, read N- to C-terminus: Large ribosomal subunit protein uL24 (103 aa).

The protein belongs to the universal ribosomal protein uL24 family. In terms of assembly, part of the 50S ribosomal subunit.

Functionally, one of two assembly initiator proteins, it binds directly to the 5'-end of the 23S rRNA, where it nucleates assembly of the 50S subunit. In terms of biological role, one of the proteins that surrounds the polypeptide exit tunnel on the outside of the subunit. This Brucella ovis (strain ATCC 25840 / 63/290 / NCTC 10512) protein is Large ribosomal subunit protein uL24.